Reading from the N-terminus, the 242-residue chain is Triosephosphate isomerase (242 aa).

Position 9–11 (9–11 (NWK)) interacts with substrate. The active-site Electrophile is the His90. The active-site Proton acceptor is Glu162. Residues Gly168, Ser205, and 226–227 (GG) contribute to the substrate site.

The protein belongs to the triosephosphate isomerase family. As to quaternary structure, homodimer.

It localises to the cytoplasm. The enzyme catalyses D-glyceraldehyde 3-phosphate = dihydroxyacetone phosphate. It participates in carbohydrate biosynthesis; gluconeogenesis. The protein operates within carbohydrate degradation; glycolysis; D-glyceraldehyde 3-phosphate from glycerone phosphate: step 1/1. Involved in the gluconeogenesis. Catalyzes stereospecifically the conversion of dihydroxyacetone phosphate (DHAP) to D-glyceraldehyde-3-phosphate (G3P). This Azoarcus sp. (strain BH72) protein is Triosephosphate isomerase.